The chain runs to 76 residues: Peptide ARACIN 1 (76 aa).

Residues 1 to 22 (MAMKTSHVLLLCLMFVIGFVEA) form the signal peptide. Positions 23 to 35 (RRSDTGPDISTPP) are cleaved as a propeptide — removed in mature form. The SxS motif essential for MIK2 binding signature appears at 36–38 (SGS). The SCOOP motif signature appears at 36-49 (SGSCGASIAEFNSS). The tract at residues 56-76 (APPCRRPRLQNSEDVTHTTLP) is disordered. The segment covering 64-76 (LQNSEDVTHTTLP) has biased composition (polar residues).

Belongs to the serine rich endogenous peptide (SCOOP) phytocytokine family. In terms of assembly, interacts with MIK2 (via extracellular leucine-rich repeat domain); this interaction triggers the formation of complex between MIK2 and the BAK1/SERK3 and SERK4 coreceptors, and subsequent BAK1 activation by phosphorylation. As to expression, mainly expressed in young developing leaves, hydathodes, immature flowers and elongating pollen tubes.

It is found in the cell membrane. The protein localises to the secreted. Its subcellular location is the extracellular space. It localises to the apoplast. The protein resides in the endoplasmic reticulum. Functionally, brassicaceae-specific phytocytokine (plant endogenous peptide released into the apoplast) perceived by MIK2 in a BAK1/SERK3 and SERK4 coreceptors-dependent manner, that modulates various physiological and antimicrobial processes including growth prevention and reactive oxygen species (ROS) response regulation. Inhibits the fungal growth of Alternaria brassicicola, Sclerotinia sclerotiorum, Fusarium graminearum, yeast (Saccharomyces) and Botrytis cinerea, thus being an antimicrobial peptide (AMP). Promotes resistance to A.brassicicola and B.cinerea. This Arabidopsis thaliana (Mouse-ear cress) protein is Peptide ARACIN 1.